The sequence spans 120 residues: Holo-[acyl-carrier-protein] synthase (120 aa).

Residues aspartate 8 and glutamate 58 each contribute to the Mg(2+) site.

The protein belongs to the P-Pant transferase superfamily. AcpS family. It depends on Mg(2+) as a cofactor.

The protein resides in the cytoplasm. The enzyme catalyses apo-[ACP] + CoA = holo-[ACP] + adenosine 3',5'-bisphosphate + H(+). Its function is as follows. Transfers the 4'-phosphopantetheine moiety from coenzyme A to a Ser of acyl-carrier-protein. The polypeptide is Holo-[acyl-carrier-protein] synthase (Anoxybacillus flavithermus (strain DSM 21510 / WK1)).